A 423-amino-acid polypeptide reads, in one-letter code: Site-specific recombinase Flp (423 aa).

One can recognise a Tyr recombinase Flp-type domain in the interval Gly136–Arg422. Tyr343 acts as the O-(3'-phospho-DNA)-tyrosine intermediate in catalysis.

The protein belongs to the 'phage' integrase family. Homotetramer.

In terms of biological role, part of the plasmid amplification system, which corrects any decrease in copy number caused by a rare missegregation event. Catalyzes the recombination between the large inverted repetitions of the 2-micron plasmid during plasmid replication. This recombination event changes the direction of one of the two replication forks in the bidirectionally replicating molecule, effectively resulting in multiple rounds of replication from a single initiation event. Binds specifically to the FLP recognition target (FRT) site where it induces DNA to bend. Three types of bend exist. Type I is approximately 60 degrees and results from 1 FLP molecule binding to 1 symmetry element. Type II is &gt;144 degrees and results from FLP molecules binding to symmetry elements a and b. Type III is approximately 65 degrees and results from FLP molecules binding to symmetry elements b and c. This chain is Site-specific recombinase Flp (FLP1), found in Saccharomyces cerevisiae (strain ATCC 204508 / S288c) (Baker's yeast).